A 524-amino-acid chain; its full sequence is uncharacterized protein (524 aa).

A disordered region spans residues 1–65; the sequence is MSDPFFTRPE…IDEENEDTYE (65 aa). Over residues 21 to 32 the composition is skewed to basic and acidic residues; it reads SKREKENQKLER. Residues 51 to 64 show a composition bias toward acidic residues; that stretch reads GFEDEIDEENEDTY. 7 WD repeats span residues 131–176, 206–245, 248–287, 290–329, 342–380, 409–448, and 457–503; these read IETA…DTEN, DHVK…PQHC, HHRD…YIET, GHQD…QLVF, YMEG…PLFT, PQPR…RSFE, and SVYG…PNSG.

It is found in the nucleus. This is an uncharacterized protein from Schizosaccharomyces pombe (strain 972 / ATCC 24843) (Fission yeast).